The primary structure comprises 251 residues: Triosephosphate isomerase (251 aa).

9-11 (NWK) serves as a coordination point for substrate. H95 (electrophile) is an active-site residue. E167 functions as the Proton acceptor in the catalytic mechanism. Substrate is bound by residues G173, S213, and 234–235 (GG).

It belongs to the triosephosphate isomerase family. As to quaternary structure, homodimer.

The protein localises to the cytoplasm. The catalysed reaction is D-glyceraldehyde 3-phosphate = dihydroxyacetone phosphate. It participates in carbohydrate biosynthesis; gluconeogenesis. The protein operates within carbohydrate degradation; glycolysis; D-glyceraldehyde 3-phosphate from glycerone phosphate: step 1/1. In terms of biological role, involved in the gluconeogenesis. Catalyzes stereospecifically the conversion of dihydroxyacetone phosphate (DHAP) to D-glyceraldehyde-3-phosphate (G3P). The chain is Triosephosphate isomerase from Pediococcus pentosaceus (strain ATCC 25745 / CCUG 21536 / LMG 10740 / 183-1w).